The primary structure comprises 307 residues: Streptomycin 6-kinase (307 aa).

Residue 133-145 (LAGLLNRLHSVPA) coordinates streptomycin. The active-site Proton acceptor is the D201.

The protein belongs to the aminoglycoside phosphotransferase family.

The catalysed reaction is streptomycin + ATP = streptomycin 6-phosphate + ADP + H(+). Functionally, the aminoglycoside phosphotransferases achieve inactivation of their antibiotic substrates by phosphorylation. The polypeptide is Streptomycin 6-kinase (aphD) (Streptomyces griseus).